The sequence spans 655 residues: Carboxypeptidase S1 homolog B (655 aa).

A signal peptide spans 1–21 (MRPFARAALCLLAAAGHLAQA). C51 and C123 form a disulfide bridge. N-linked (GlcNAc...) asparagine glycans are attached at residues N130, N163, and N186. S240 is a catalytic residue. N-linked (GlcNAc...) asparagine glycans are attached at residues N266, N302, and N311. Disulfide bonds link C328/C364 and C335/C357. A glycan (N-linked (GlcNAc...) asparagine) is linked at N414. D459 is an active-site residue. Residue C462 participates in substrate binding. N-linked (GlcNAc...) asparagine glycans are attached at residues N475, N493, and N506. Residue H517 is part of the active site. E518 contacts substrate. Residues N598 and N612 are each glycosylated (N-linked (GlcNAc...) asparagine). G631 is lipidated: GPI-anchor amidated glycine. The propeptide at 632–655 (AALVSGRIKFHVHVIKSFDYYIFI) is removed in mature form.

The protein belongs to the peptidase S10 family.

It is found in the cell membrane. It carries out the reaction Preferential release of a C-terminal arginine or lysine residue.. In terms of biological role, extracellular serine carboxypeptidase that contributes to pathogenicity. In Arthroderma otae (strain ATCC MYA-4605 / CBS 113480) (Microsporum canis), this protein is Carboxypeptidase S1 homolog B (SCPB).